Consider the following 370-residue polypeptide: Chaperone protein DnaJ (370 aa).

The region spanning 5–69 (DYYEVLGVDR…QKKAHYDQFG (65 aa)) is the J domain. The CR-type zinc finger occupies 128 to 210 (GKETTIEIPR…CGGKGKVRKR (83 aa)). Zn(2+) contacts are provided by C141, C144, C158, C161, C184, C187, C198, and C201. CXXCXGXG motif repeat units follow at residues 141 to 148 (CHTCSGSG), 158 to 165 (CPHCGGSG), 184 to 191 (CHHCEGTG), and 198 to 205 (CATCGGKG).

This sequence belongs to the DnaJ family. As to quaternary structure, homodimer. Zn(2+) is required as a cofactor.

The protein localises to the cytoplasm. In terms of biological role, participates actively in the response to hyperosmotic and heat shock by preventing the aggregation of stress-denatured proteins and by disaggregating proteins, also in an autonomous, DnaK-independent fashion. Unfolded proteins bind initially to DnaJ; upon interaction with the DnaJ-bound protein, DnaK hydrolyzes its bound ATP, resulting in the formation of a stable complex. GrpE releases ADP from DnaK; ATP binding to DnaK triggers the release of the substrate protein, thus completing the reaction cycle. Several rounds of ATP-dependent interactions between DnaJ, DnaK and GrpE are required for fully efficient folding. Also involved, together with DnaK and GrpE, in the DNA replication of plasmids through activation of initiation proteins. This is Chaperone protein DnaJ from Halalkalibacterium halodurans (strain ATCC BAA-125 / DSM 18197 / FERM 7344 / JCM 9153 / C-125) (Bacillus halodurans).